The following is a 69-amino-acid chain: Small ribosomal subunit protein uS7 (69 aa).

This sequence belongs to the universal ribosomal protein uS7 family. In terms of assembly, part of the 30S ribosomal subunit.

Functionally, one of the primary rRNA binding proteins, it binds directly to 16S rRNA where it nucleates assembly of the head domain of the 30S subunit. Is located at the subunit interface close to the decoding center. The chain is Small ribosomal subunit protein uS7 (rps7) from Methanococcoides methylutens.